Here is a 172-residue protein sequence, read N- to C-terminus: 3-hydroxydecanoyl-[acyl-carrier-protein] dehydratase (172 aa).

Residue histidine 71 is part of the active site.

It belongs to the thioester dehydratase family. FabA subfamily. Homodimer.

It localises to the cytoplasm. The catalysed reaction is a (3R)-hydroxyacyl-[ACP] = a (2E)-enoyl-[ACP] + H2O. It catalyses the reaction (3R)-hydroxydecanoyl-[ACP] = (2E)-decenoyl-[ACP] + H2O. It carries out the reaction (2E)-decenoyl-[ACP] = (3Z)-decenoyl-[ACP]. It functions in the pathway lipid metabolism; fatty acid biosynthesis. In terms of biological role, necessary for the introduction of cis unsaturation into fatty acids. Catalyzes the dehydration of (3R)-3-hydroxydecanoyl-ACP to E-(2)-decenoyl-ACP and then its isomerization to Z-(3)-decenoyl-ACP. Can catalyze the dehydratase reaction for beta-hydroxyacyl-ACPs with saturated chain lengths up to 16:0, being most active on intermediate chain length. In Serratia proteamaculans (strain 568), this protein is 3-hydroxydecanoyl-[acyl-carrier-protein] dehydratase.